We begin with the raw amino-acid sequence, 204 residues long: Protein Mis18-alpha (204 aa).

Ser13, Ser16, and Ser17 each carry phosphoserine. In terms of domain architecture, Mis18 spans 51–149; the sequence is PLVFLCARCR…SVEAVESYTL (99 aa). Residues Cys56, Cys59, Cys112, and Cys115 each contribute to the Zn(2+) site. Lys133 is covalently cross-linked (Glycyl lysine isopeptide (Lys-Gly) (interchain with G-Cter in SUMO2)). Ser204 is subject to Phosphoserine.

This sequence belongs to the mis18 family. In terms of assembly, homodimer, and heterodimer with OIP5/MIS18B. Identified in a complex containing MIS18A, OIP5/MIS18B, MIS18BP1, RBBP7 and RBBP4.

Its subcellular location is the nucleus. It localises to the chromosome. It is found in the centromere. Its function is as follows. Required for recruitment of CENPA to centromeres and normal chromosome segregation during mitosis. The protein is Protein Mis18-alpha (Mis18a) of Mus musculus (Mouse).